The following is a 480-amino-acid chain: PTS system sucrose-specific EIIBC component (480 aa).

Residues 4–87 form the PTS EIIB type-1 domain; it reads KKSAENILQA…EKITGKEASS (84 aa). Cys26 serves as the catalytic Phosphocysteine intermediate; for EIIB activity. The next 8 membrane-spanning stretches (helical) occupy residues 109-129, 158-178, 182-202, 264-284, 303-323, 349-369, 405-425, and 449-469; these read LSDI…LMGI, MINI…GFSA, FGGN…PELM, LLTP…FVGP, FGGA…VITG, PIAT…FFII, PFIG…FFKV, and LHYG…TYAL. One can recognise a PTS EIIC type-1 domain in the interval 120–480; the sequence is IVAGGLLMGI…YRKKYRNIEA (361 aa).

It localises to the cell membrane. It carries out the reaction N(pros)-phospho-L-histidyl-[protein](out) + sucrose = sucrose 6(G)-phosphate(in) + L-histidyl-[protein]. The phosphoenolpyruvate-dependent sugar phosphotransferase system (sugar PTS), a major carbohydrate active transport system, catalyzes the phosphorylation of incoming sugar substrates concomitantly with their translocation across the cell membrane. This system is involved in sucrose transport. This is PTS system sucrose-specific EIIBC component from Staphylococcus xylosus.